The primary structure comprises 901 residues: Probable inorganic carbon transporter subunit DabA (901 aa).

Zn(2+) contacts are provided by C424, D426, H606, and C621.

This sequence belongs to the inorganic carbon transporter (TC 9.A.2) DabA family. In terms of assembly, forms a complex with DabB. Zn(2+) is required as a cofactor.

Its subcellular location is the cell membrane. In terms of biological role, part of an energy-coupled inorganic carbon pump. The sequence is that of Probable inorganic carbon transporter subunit DabA from Staphylococcus aureus (strain Mu3 / ATCC 700698).